We begin with the raw amino-acid sequence, 503 residues long: Probable cytosol aminopeptidase (503 aa).

Mn(2+)-binding residues include lysine 268 and aspartate 273. Lysine 280 is an active-site residue. Residues aspartate 291, aspartate 350, and glutamate 352 each contribute to the Mn(2+) site. Arginine 354 is a catalytic residue.

This sequence belongs to the peptidase M17 family. Mn(2+) is required as a cofactor.

It is found in the cytoplasm. It carries out the reaction Release of an N-terminal amino acid, Xaa-|-Yaa-, in which Xaa is preferably Leu, but may be other amino acids including Pro although not Arg or Lys, and Yaa may be Pro. Amino acid amides and methyl esters are also readily hydrolyzed, but rates on arylamides are exceedingly low.. The enzyme catalyses Release of an N-terminal amino acid, preferentially leucine, but not glutamic or aspartic acids.. Presumably involved in the processing and regular turnover of intracellular proteins. Catalyzes the removal of unsubstituted N-terminal amino acids from various peptides. This Herminiimonas arsenicoxydans protein is Probable cytosol aminopeptidase.